The following is a 547-amino-acid chain: CTP synthase (547 aa).

The interval 1–265 is amidoligase domain; the sequence is MARFVFITGG…DQAVLDAFSI (265 aa). Residue Ser13 coordinates CTP. UTP is bound at residue Ser13. Residues 14 to 19 and Asp71 contribute to the ATP site; that span reads SLGKGL. Residues Asp71 and Glu139 each contribute to the Mg(2+) site. CTP-binding positions include 146–148, 186–191, and Lys222; these read DIE and KTKPTQ. UTP contacts are provided by residues 186–191 and Lys222; that span reads KTKPTQ. In terms of domain architecture, Glutamine amidotransferase type-1 spans 291-546; it reads NVAIVGKYTQ…VRAAKEVSRL (256 aa). An L-glutamine-binding site is contributed by Gly353. The active-site Nucleophile; for glutamine hydrolysis is Cys380. Residues 381 to 384, Glu404, and Arg474 each bind L-glutamine; that span reads LGMQ. Catalysis depends on residues His519 and Glu521.

Belongs to the CTP synthase family. As to quaternary structure, homotetramer.

The catalysed reaction is UTP + L-glutamine + ATP + H2O = CTP + L-glutamate + ADP + phosphate + 2 H(+). The enzyme catalyses L-glutamine + H2O = L-glutamate + NH4(+). It carries out the reaction UTP + NH4(+) + ATP = CTP + ADP + phosphate + 2 H(+). It functions in the pathway pyrimidine metabolism; CTP biosynthesis via de novo pathway; CTP from UDP: step 2/2. Allosterically activated by GTP, when glutamine is the substrate; GTP has no effect on the reaction when ammonia is the substrate. The allosteric effector GTP functions by stabilizing the protein conformation that binds the tetrahedral intermediate(s) formed during glutamine hydrolysis. Inhibited by the product CTP, via allosteric rather than competitive inhibition. Its function is as follows. Catalyzes the ATP-dependent amination of UTP to CTP with either L-glutamine or ammonia as the source of nitrogen. Regulates intracellular CTP levels through interactions with the four ribonucleotide triphosphates. In Dinoroseobacter shibae (strain DSM 16493 / NCIMB 14021 / DFL 12), this protein is CTP synthase.